The sequence spans 159 residues: Phosphopantetheine adenylyltransferase (159 aa).

Residue T10 coordinates substrate. ATP contacts are provided by residues 10–11 (TF) and H18. Residues K42, M74, and R88 each coordinate substrate. ATP contacts are provided by residues 89–91 (GLR), E99, and 124–130 (WSFISSS).

It belongs to the bacterial CoaD family. Homohexamer. It depends on Mg(2+) as a cofactor.

It localises to the cytoplasm. It catalyses the reaction (R)-4'-phosphopantetheine + ATP + H(+) = 3'-dephospho-CoA + diphosphate. It functions in the pathway cofactor biosynthesis; coenzyme A biosynthesis; CoA from (R)-pantothenate: step 4/5. Its function is as follows. Reversibly transfers an adenylyl group from ATP to 4'-phosphopantetheine, yielding dephospho-CoA (dPCoA) and pyrophosphate. This chain is Phosphopantetheine adenylyltransferase, found in Pectobacterium carotovorum subsp. carotovorum (strain PC1).